We begin with the raw amino-acid sequence, 243 residues long: Terpene cyclase dpmpB (243 aa).

7 consecutive transmembrane segments (helical) span residues 13 to 33, 51 to 71, 78 to 98, 112 to 132, 141 to 161, 169 to 189, and 207 to 227; these read FLEV…GWTA, ALMP…ILPF, WVHV…IKFA, LTWI…ALAA, AWSA…QLLC, SYLL…QDIL, and LWFV…LWYV.

The protein belongs to the paxB family.

Its subcellular location is the membrane. Its pathway is secondary metabolite biosynthesis; terpenoid biosynthesis. In terms of biological role, terpene cyclase; part of the gene cluster that mediates the biosynthesis of diterpenoid pyrones. The first step of the pathway is the synthesis of the alpha-pyrone moiety by the polyketide synthase dpmpA via condensation of one acetyl-CoA starter unit with 3 malonyl-CoA units and 2 methylations. The alpha-pyrone is then combined with geranylgeranyl pyrophosphate (GGPP) formed by the GGPP synthase dpmpD through the action of the prenyltransferase dpmpC to yield a linear alpha-pyrone diterpenoid. Subsequent steps in the diterpenoid pyrone biosynthetic pathway involve the decalin core formation, which is initiated by the epoxidation of the C10-C11 olefin by the FAD-dependent oxidoreductase dpmpE, and is followed by a cyclization cascade catalyzed by the terpene cyclase dpmpB. The short chain dehydrogenase/reductase dpmpG then oxidizes the 8S hydroxy group to a ketone and the short chain dehydrogenase/reductase dpmpH reduces the ketone to the 8R hydroxy group to yield higginsianin B. Higginsianin B is further methylated by the methyltransferase dpmpI to produce the intermediate named FDDP B. The cytochrome P450 monooxygenase dpmpJ then oxidizes the C-26 methyl to primary alcohol, producing the final diterpenoid pyrone with a C-26 primary alcohol on the gamma-pyrone moiety named FDDP C. In Macrophomina phaseolina (strain MS6) (Charcoal rot fungus), this protein is Terpene cyclase dpmpB.